The chain runs to 168 residues: MIMATITLKGNSIHTAGELPAVGSQLPAFTLVKSDLSEVSPADFAGKKLVLNIFPSLDTAVCAASVRRFNKEAGERGDAVVLCISADLPFAQGRFCTTEGLDNVVPLSVYRSPEFGLDYGLTITDGPLKGLLSRAVIVTDASGKVLYAEQVPEIVQEPDYDKALAALA.

The Thioredoxin domain maps to 20–168 (PAVGSQLPAF…DYDKALAALA (149 aa)). Cys-62 serves as the catalytic Cysteine sulfenic acid (-SOH) intermediate. A disulfide bridge links Cys-62 with Cys-96.

It belongs to the peroxiredoxin family. Tpx subfamily. In terms of assembly, homodimer.

It catalyses the reaction a hydroperoxide + [thioredoxin]-dithiol = an alcohol + [thioredoxin]-disulfide + H2O. Functionally, thiol-specific peroxidase that catalyzes the reduction of hydrogen peroxide and organic hydroperoxides to water and alcohols, respectively. Plays a role in cell protection against oxidative stress by detoxifying peroxides. This Chlorobaculum tepidum (strain ATCC 49652 / DSM 12025 / NBRC 103806 / TLS) (Chlorobium tepidum) protein is Thiol peroxidase.